We begin with the raw amino-acid sequence, 484 residues long: MKGLLLRIIAAFALVLWAIDMVFPWQQMMRSEENRYNAIQQRGKLVVGTVNNPVSYFIGNEGQAGLEYELSRAFADYLGVELEMKAMDNGEQLFDALEDNEIDIAAANLLYQAKKAETFQLGPAYYSASWQLVYRKGESRPQSLSQIKDKLIIARGSELPLILQGYQTKYPNLKWQLENNQTQEELLLQVAQGKIKYTVANSIDVSAVQQVRPEIAVAFDVTDEASVHWYLPNNSYNELQAALLDFMNTALEGGLIARIEEKYFNHFSQFDYVDMRQYVQAINDILPKYAPLFDRYKGDLDWRLLAAIAYQESHWNENATSPTGVRGMMMLTKDTAERMKIADRTDAEQSIKAGSEYLHWLISQVPDSIPKEDRIWFALTGYNMGLGHMLDARRLTKNLGGDPDNWLDVKKNLPLLAEKRYYPNLKYGYARGYEAFQYVENIRRYMNSIINYYRVQENADNKDKPSETDENLPLPLTDNQEKQE.

The first 18 residues, 1 to 18 (MKGLLLRIIAAFALVLWA), serve as a signal peptide directing secretion. The non-LT domain stretch occupies residues 19–267 (IDMVFPWQQM…RIEEKYFNHF (249 aa)). Residues 268-484 (SQFDYVDMRQ…PLTDNQEKQE (217 aa)) are LT domain. Glutamate 312 is an active-site residue. The segment at 459–484 (ADNKDKPSETDENLPLPLTDNQEKQE) is disordered.

It in the N-terminal section; belongs to the bacterial solute-binding protein 3 family. In the C-terminal section; belongs to the transglycosylase Slt family.

The protein localises to the cell outer membrane. The enzyme catalyses Exolytic cleavage of the (1-&gt;4)-beta-glycosidic linkage between N-acetylmuramic acid (MurNAc) and N-acetylglucosamine (GlcNAc) residues in peptidoglycan, from either the reducing or the non-reducing ends of the peptidoglycan chains, with concomitant formation of a 1,6-anhydrobond in the MurNAc residue.. Its function is as follows. Murein-degrading enzyme that degrades murein glycan strands and insoluble, high-molecular weight murein sacculi, with the concomitant formation of a 1,6-anhydromuramoyl product. Lytic transglycosylases (LTs) play an integral role in the metabolism of the peptidoglycan (PG) sacculus. Their lytic action creates space within the PG sacculus to allow for its expansion as well as for the insertion of various structures such as secretion systems and flagella. The chain is Membrane-bound lytic murein transglycosylase F from Mannheimia succiniciproducens (strain KCTC 0769BP / MBEL55E).